Here is a 190-residue protein sequence, read N- to C-terminus: Large ribosomal subunit protein uL5 (190 aa).

This sequence belongs to the universal ribosomal protein uL5 family. As to quaternary structure, part of the 50S ribosomal subunit; part of the 5S rRNA/L5/L18/L25 subcomplex. Contacts the 5S rRNA and the P site tRNA. Forms a bridge to the 30S subunit in the 70S ribosome.

In terms of biological role, this is one of the proteins that bind and probably mediate the attachment of the 5S RNA into the large ribosomal subunit, where it forms part of the central protuberance. In the 70S ribosome it contacts protein S13 of the 30S subunit (bridge B1b), connecting the 2 subunits; this bridge is implicated in subunit movement. Contacts the P site tRNA; the 5S rRNA and some of its associated proteins might help stabilize positioning of ribosome-bound tRNAs. The chain is Large ribosomal subunit protein uL5 from Bifidobacterium longum (strain DJO10A).